Consider the following 453-residue polypeptide: Allantoinase (453 aa).

The Zn(2+) site is built by His59, His61, Lys146, His186, His242, and Asp315. At Lys146 the chain carries N6-carboxylysine.

It belongs to the metallo-dependent hydrolases superfamily. Allantoinase family. Homotetramer. Zn(2+) serves as cofactor. In terms of processing, carboxylation allows a single lysine to coordinate two zinc ions.

It catalyses the reaction (S)-allantoin + H2O = allantoate + H(+). Its pathway is nitrogen metabolism; (S)-allantoin degradation; allantoate from (S)-allantoin: step 1/1. Functionally, catalyzes the conversion of allantoin (5-ureidohydantoin) to allantoic acid by hydrolytic cleavage of the five-member hydantoin ring. The protein is Allantoinase of Escherichia coli (strain K12 / MC4100 / BW2952).